The primary structure comprises 245 residues: Ubiquinone/menaquinone biosynthesis C-methyltransferase UbiE (245 aa).

Residues threonine 71, aspartate 92, and 118–119 (DA) contribute to the S-adenosyl-L-methionine site.

It belongs to the class I-like SAM-binding methyltransferase superfamily. MenG/UbiE family.

The catalysed reaction is a 2-demethylmenaquinol + S-adenosyl-L-methionine = a menaquinol + S-adenosyl-L-homocysteine + H(+). The enzyme catalyses a 2-methoxy-6-(all-trans-polyprenyl)benzene-1,4-diol + S-adenosyl-L-methionine = a 5-methoxy-2-methyl-3-(all-trans-polyprenyl)benzene-1,4-diol + S-adenosyl-L-homocysteine + H(+). Its pathway is quinol/quinone metabolism; menaquinone biosynthesis; menaquinol from 1,4-dihydroxy-2-naphthoate: step 2/2. It participates in cofactor biosynthesis; ubiquinone biosynthesis. Its function is as follows. Methyltransferase required for the conversion of demethylmenaquinol (DMKH2) to menaquinol (MKH2) and the conversion of 2-polyprenyl-6-methoxy-1,4-benzoquinol (DDMQH2) to 2-polyprenyl-3-methyl-6-methoxy-1,4-benzoquinol (DMQH2). This is Ubiquinone/menaquinone biosynthesis C-methyltransferase UbiE from Neisseria meningitidis serogroup C / serotype 2a (strain ATCC 700532 / DSM 15464 / FAM18).